The chain runs to 198 residues: Ribosome maturation factor RimM (198 aa).

The 77-residue stretch at 92–168 folds into the PRC barrel domain; the sequence is DDEYYHADLI…IELPAEIEGE (77 aa). The segment covering 163–172 has biased composition (acidic residues); sequence AEIEGEDQDS. The interval 163-198 is disordered; sequence AEIEGEDQDSSDNAGSPEGDAAASNSARHPRESGDP.

This sequence belongs to the RimM family. Binds ribosomal protein uS19.

Its subcellular location is the cytoplasm. In terms of biological role, an accessory protein needed during the final step in the assembly of 30S ribosomal subunit, possibly for assembly of the head region. Essential for efficient processing of 16S rRNA. May be needed both before and after RbfA during the maturation of 16S rRNA. It has affinity for free ribosomal 30S subunits but not for 70S ribosomes. This chain is Ribosome maturation factor RimM, found in Bradyrhizobium sp. (strain BTAi1 / ATCC BAA-1182).